Here is an 88-residue protein sequence, read N- to C-terminus: Small ribosomal subunit protein bS16c (88 aa).

This sequence belongs to the bacterial ribosomal protein bS16 family.

The protein resides in the plastid. It is found in the chloroplast. The polypeptide is Small ribosomal subunit protein bS16c (Oenothera elata subsp. hookeri (Hooker's evening primrose)).